Consider the following 358-residue polypeptide: MTLETPVRVLIVDDSAVVRQMLTEILSRDPGIEVVGSAADPLLAREKIKRLNPDVITLDVEMPRMDGLVFLENLMRLRPTPVVMISSLTERGADTTLQALSLGAVDFISKPKIDVARGLEGYAEEIVSKVKMAAKAKVSALNRPSAPKITLDMQSAPVPGSALRFRTTDRLIAIGASAGGTEALRVVLEHMPADAPAVVMTQHLPASFSTAFAERLNRHSAMSVREASDGEAILPGHAYLPPGGQHLRIIRDGARWRCRIDDGPPVNRHKPAVDVLFRSVAANAGPNAVGAILTGMGDDGARGLLEMLQAGAPTLVQDEASSVVWGMPGAAYKLGAAQEVVPLERVAERLIALSAQAR.

A Response regulatory domain is found at 8 to 125 (RVLIVDDSAV…ARGLEGYAEE (118 aa)). Aspartate 59 is modified (4-aspartylphosphate). In terms of domain architecture, CheB-type methylesterase spans 157 to 352 (PVPGSALRFR…LERVAERLIA (196 aa)). Active-site residues include serine 177, histidine 203, and aspartate 299.

Belongs to the CheB family. Phosphorylated by CheA. Phosphorylation of the N-terminal regulatory domain activates the methylesterase activity.

The protein resides in the cytoplasm. It carries out the reaction [protein]-L-glutamate 5-O-methyl ester + H2O = L-glutamyl-[protein] + methanol + H(+). The enzyme catalyses L-glutaminyl-[protein] + H2O = L-glutamyl-[protein] + NH4(+). Functionally, involved in chemotaxis. Part of a chemotaxis signal transduction system that modulates chemotaxis in response to various stimuli. Catalyzes the demethylation of specific methylglutamate residues introduced into the chemoreceptors (methyl-accepting chemotaxis proteins or MCP) by CheR. Also mediates the irreversible deamidation of specific glutamine residues to glutamic acid. The polypeptide is Protein-glutamate methylesterase/protein-glutamine glutaminase 1 (Xanthomonas campestris pv. campestris (strain ATCC 33913 / DSM 3586 / NCPPB 528 / LMG 568 / P 25)).